The sequence spans 269 residues: Phosphonates import ATP-binding protein PhnC (269 aa).

Residues 8-251 form the ABC transporter domain; it reads IHLYGASLRH…LLDALYANEQ (244 aa). Residue 40–47 coordinates ATP; it reads GPSGAGKS.

Belongs to the ABC transporter superfamily. Phosphonates importer (TC 3.A.1.9.1) family. As to quaternary structure, the complex is composed of two ATP-binding proteins (PhnC), two transmembrane proteins (PhnE) and a solute-binding protein (PhnD).

It is found in the cell inner membrane. It carries out the reaction phosphonate(out) + ATP + H2O = phosphonate(in) + ADP + phosphate + H(+). Part of the ABC transporter complex PhnCDE involved in phosphonates import. Responsible for energy coupling to the transport system. In Pseudomonas putida (strain ATCC 47054 / DSM 6125 / CFBP 8728 / NCIMB 11950 / KT2440), this protein is Phosphonates import ATP-binding protein PhnC.